The sequence spans 526 residues: Microphthalmia-associated transcription factor (526 aa).

A disordered region spans residues 1–54 (MQSESGIVPDFEVGEEFHEEPKTYYELKSQPLKSSSSAEHPGASKPPISSSSMT). At Ser-5 the chain carries Phosphoserine; by MTOR. Positions 15–25 (EEFHEEPKTYY) are enriched in basic and acidic residues. A compositionally biased stretch (low complexity) spans 41 to 54 (PGASKPPISSSSMT). Ser-180 bears the Phosphoserine; by MAPK mark. Residues 224 to 295 (DDVIDDIISL…PNIKRELTAC (72 aa)) are transactivation. Ser-280 carries the phosphoserine; by MARK3 modification. Residue Lys-289 forms a Glycyl lysine isopeptide (Lys-Gly) (interchain with G-Cter in SUMO) linkage. Positions 311 to 364 (QKKDNHNLIERRRRFNINDRIKELGTLIPKSNDPDMRWNKGTILKASVDYIRKL) constitute a bHLH domain. Residues 355 to 402 (KASVDYIRKLQREQQRAKELENRQKKLEHANRHLLLRIQELEMQARAH) are a coiled coil. The interval 374–395 (LENRQKKLEHANRHLLLRIQEL) is leucine-zipper. The tract at residues 401-431 (AHGLSLIPSTGLCSPDLVNRIIKQEPVLENC) is DNA-binding regulation. Ser-405 is subject to Phosphoserine; by GSK3. Ser-414 bears the Phosphoserine mark. Lys-423 is covalently cross-linked (Glycyl lysine isopeptide (Lys-Gly) (interchain with G-Cter in SUMO)). Phosphoserine is present on Ser-491. The tract at residues 496-526 (TDPLLSSVSPGASKTSSRRSSMSMEETEHTC) is disordered. The span at 499–509 (LLSSVSPGASK) shows a compositional bias: polar residues. Ser-516 carries the post-translational modification Phosphoserine; by RPS6KA1.

It belongs to the MiT/TFE family. Homodimer or heterodimer; dimerization is mediated via the coiled coil region. Efficient DNA binding requires dimerization with another bHLH protein. Binds DNA in the form of homodimer or heterodimer with either TFE3, TFEB or TFEC. Interacts with small GTPases Rag (RagA/RRAGA, RagB/RRAGB, RagC/RRAGC and/or RagD/RRAGD); promoting its recruitment to lysosomal membrane in the presence of nutrients. Interacts with KARS1. Identified in a complex with HINT1 and CTNNB1. Interacts with VSX2. In terms of processing, when nutrients are present, phosphorylation by MTOR at Ser-5 via non-canonical mTORC1 pathway promotes ubiquitination by the SCF(BTRC) complex, followed by degradation. Phosphorylation at Ser-405 significantly enhances the ability to bind the tyrosinase promoter. Phosphorylation by MARK3/cTAK1 at Ser-280 promotes association with 14-3-3/YWHA adapters and retention in the cytosol. Phosphorylated at Ser-180 and Ser-516 following KIT signaling, triggering a short live activation: Phosphorylation at Ser-180 and Ser-516 by MAPK and RPS6KA1, respectively, activate the transcription factor activity but also promote ubiquitination and subsequent degradation by the proteasome. Phosphorylated in response to blue light (415nm). Post-translationally, ubiquitinated by the SCF(BTRC) and SCF(FBXW11) complexes following phosphorylation ar Ser-5 by MTOR, leading to its degradation by the proteasome. Ubiquitinated following phosphorylation at Ser-180, leading to subsequent degradation by the proteasome. Deubiquitinated by USP13, preventing its degradation. In terms of tissue distribution, expressed in melanocytes (at protein level). Expressed in the retinal pigment epithelium, brain, and placenta. Expressed in the kidney. As to expression, expressed in the kidney and retinal pigment epithelium. In terms of tissue distribution, expressed in the kidney. Expressed in melanocytes.

The protein localises to the nucleus. It is found in the cytoplasm. The protein resides in the lysosome membrane. Functionally, transcription factor that acts as a master regulator of melanocyte survival and differentiation as well as melanosome biogenesis. Binds to M-boxes (5'-TCATGTG-3') and symmetrical DNA sequences (E-boxes) (5'-CACGTG-3') found in the promoter of pigmentation genes, such as tyrosinase (TYR). Involved in the cellular response to amino acid availability by acting downstream of MTOR: in the presence of nutrients, MITF phosphorylation by MTOR promotes its inactivation. Upon starvation or lysosomal stress, inhibition of MTOR induces MITF dephosphorylation, resulting in transcription factor activity. Plays an important role in melanocyte development by regulating the expression of tyrosinase (TYR) and tyrosinase-related protein 1 (TYRP1). Plays a critical role in the differentiation of various cell types, such as neural crest-derived melanocytes, mast cells, osteoclasts and optic cup-derived retinal pigment epithelium. The polypeptide is Microphthalmia-associated transcription factor (Homo sapiens (Human)).